Here is a 70-residue protein sequence, read N- to C-terminus: Large ribosomal subunit protein eL38 (70 aa).

Lys-4 is covalently cross-linked (Glycyl lysine isopeptide (Lys-Gly) (interchain with G-Cter in SUMO2)). At Lys-9 the chain carries N6-acetyllysine; alternate. A Glycyl lysine isopeptide (Lys-Gly) (interchain with G-Cter in SUMO2); alternate cross-link involves residue Lys-9. Lys-67 carries the N6-acetyllysine modification.

The protein belongs to the eukaryotic ribosomal protein eL38 family. Component of the large ribosomal subunit.

It localises to the cytoplasm. In terms of biological role, component of the large ribosomal subunit. The ribosome is a large ribonucleoprotein complex responsible for the synthesis of proteins in the cell. This is Large ribosomal subunit protein eL38 (RPL38) from Macaca fascicularis (Crab-eating macaque).